The chain runs to 317 residues: Acetyl-coenzyme A carboxylase carboxyl transferase subunit alpha (317 aa).

Residues R40–D294 form the CoA carboxyltransferase C-terminal domain.

It belongs to the AccA family. In terms of assembly, acetyl-CoA carboxylase is a heterohexamer composed of biotin carboxyl carrier protein (AccB), biotin carboxylase (AccC) and two subunits each of ACCase subunit alpha (AccA) and ACCase subunit beta (AccD).

Its subcellular location is the cytoplasm. The catalysed reaction is N(6)-carboxybiotinyl-L-lysyl-[protein] + acetyl-CoA = N(6)-biotinyl-L-lysyl-[protein] + malonyl-CoA. It functions in the pathway lipid metabolism; malonyl-CoA biosynthesis; malonyl-CoA from acetyl-CoA: step 1/1. Component of the acetyl coenzyme A carboxylase (ACC) complex. First, biotin carboxylase catalyzes the carboxylation of biotin on its carrier protein (BCCP) and then the CO(2) group is transferred by the carboxyltransferase to acetyl-CoA to form malonyl-CoA. In Actinobacillus succinogenes (strain ATCC 55618 / DSM 22257 / CCUG 43843 / 130Z), this protein is Acetyl-coenzyme A carboxylase carboxyl transferase subunit alpha.